A 3901-amino-acid chain; its full sequence is MAIGNDELLASHEEHSRCQFPRLVANPSEEKCLRCNLDVPIRNLLKEACAQYETSLDYVLGAIWAIILHQYIQDDYVGFAVVRRTRTGEAEAEFTDSAERSYSWRTPIHGEMAIGELIKPSTWKRSPYAPGVDLFNTSLVIEEEQQQEQTNTGHHVLKEPFQISLLVKCWPDSPVISLVFSSSYLHPTFGKALASSIEQCARGILSCHDSLVNQMNLFSPIQREIMTRWQGVPSLTSHFNFLYEIVCHNAQHHPSVVALDAWDGRWSYQELDEATSRLAARLVTHGVGPGVFVPVCFDKSCWAVVAMLAINKAGAAFVPIDPSYPAERRQMIILTVAASVILTSQQHLNLFPPSPEVMTICLSPSILSDSPASGYPRRMRFEGPAYVLFTSGSTGEPKGCEISHQAFASLVNHTEDLHLTPESRTLQFASYSFGMSVIEIFCTLVAGGTVCIPSAEQRLNDLATAIKTMEINWAILTPTVIASLYPEDLPHLRFVLVAGEISDQSAVDQWAAAGVDIRHAYGLTEWTGIFAVSHKISGQGTGQTTIGKPVDAHAWLVNTQNPAQLVPLGAPGELVIKGPGLARGYLHDPLRTKASFLSDLPWLAEWKLAHGQVYRTGDIMRYHVDGSLVYLHRKDNQIKIRGLRVELGEIESHLTRILKGAKRVAVIACKPKGSHDLHVLIALILLPHVADGQLLAIGRRSKGLPFVQLPGKTREELRDARESLRRWLPDYMIPQFLLPLVDMPTTVSGKIDRRRIRTLLNELSVKELMNHAGVQVEHRLPVTANEIVVHEVTCKSLGLDLVSMQDSFFDLAGDSVAAMKMSGLARQHGLQLTVKDIFEAPILQDMATRLTRIKELTVTAIPFALLPNVVPSQIVAEIAEQAKVDPLEITDAYPCSALQEGLCALSMRDAQSYKVRLICHIRPGTDLQVFRAAWERTYLINDVLRTRFVTSSTHGAIQAVIQRPFRWDEAESFEQYVTLIEQEPMGLGKQLVRACLLRDPRSQHQQTAFVLTLHHGICDRWSIRQLLEQIDRQVHAFPKQLELDPIEFRPFISYITETASKSAEYWENQFQDIKAVIFPELPAPDYTPVADQLTQYDIKLPTRLVREISIANYIRLAWALVLAHNTSSDDVVFGAIVSGRASPVKGIVTLTGPTIATVPIRINLSREMTVLQALTSVERQFIEMLPWEQAGLQNIRRLSPEADRACSFQSLFTVQPFLGNPPPLFSACEEGAAIAGGFASYALNIECYISEDERRMQAKVAFDPRVIALGRVRRLLEHLQVVLNEVAAQTERRLSSISPLSPSDMSLLWEWNKSVPPKPKELLHEIIQSHAQKTPKSPAVSAFDGELTFEELEWHATQLAGELLQQVPHPGMLLPMLFEKSVWVTVAMLAVLKIGSAIVLLDGSYSIERMRTICADVEAPLVVCSSQMTSTVEQIGLRPVIVAHTRAFFSKSASPVSLPPVRVHSDSPCYMIFTSGSTGMPKGLLVNHGAFAASMLGWMPKLQVDKSSRVLQFSSFAFDACFAETFTALFAGACICVPSDDQRMNDLHAAMRQHRISHAILTPSSARVVRAEQVPSLRVLALVGEPILPSDMAYWAPRVRLLNGYGPAECAPASVVQYIDGSPALDVRDIGHPVGCVAWVCDPRDSEILKPVGVAGELLIEGPNVGLGYFKDAAKTDSAFVQPRWLQSLRGMTGVRAYRSSDLVCYTEDGRLRYLGRIGNQVKLRGQRLDPTHIEHQLARCFPGATEVAVVVGCPRNASDRPTLAAFVVVDKKANGNGSTDFHDVPTKDVANRAATARARMQQVLPGYMVPTLMIPVSSLPCSAAGKLDRRALENEIASRTWKELSQYESANESSTNRTPLDTERDLQGIWAKVLDLPMEAVGLRQSFFALGGDSITAMLVVAEARGRRVGLNITVDDIFRFRTIEQIAAQAATRAATIQQLCSHDVLDVPFKLTPIQQLFFRTQGQKVRHRFNHNVLLHLTQRIPYHRLESAMKTIVTAHPMLRARFVPGTAGLDWKQNIPSNIEGTFRCKHQTNGTMARILADGQRSLNITAGPVFSADLIDTEERQTILLVAHHLVVDLVSWTVILNDLDELLCGDPISGHTSTSFQTWSRLLDEYVRGQARAARLPDAQPWDGIEGFWGISQEQMTFGSCEDTTVQIERETTDLLLGDVNKTFGTQPVEVLHAALLFAFIQAFPKRPPPATYSEAHGREPWDATTDLTRTVGWFTTLAPVLLQLDSASELSEAVGQVKDARRRLTRNGLDAFTNRQQAGVMEIVFNYGGRYSQQLQKAGALFEVQSFQTLNIFDTGLDVRRWSVVDINSFVQDGKLTFVFTHPCGPSQTRIISEWTLHLMKTLKTLATDFSSASRIYTPMDFPLLKTDKAQLERLLSSLSWISPASDIENLYPCAPIQRGILLSQEKERSHYHVTMLWEIQIAGGVSASVPKAKDAIHQVITCHPCLRTSFVRSFSERALYDQVVTHNASPQIEVVHNPSKGWQGRPSAKGSPLTPEFPNRFTIHVDQEQRVYIRLDVTHALVDAMSFSLIQRDLCLAYEGRLNISSGPPYANFIAYLQSRNEEEDRVFWEEELEGIQPCLFPSLTDYQVGEVDDALSWSVELQHSEEIYAYCRAHSVTPANIFCLAWSLVLRSYVGSDDVCFGVLASGRELPFEGAQDVVGPLINVLTFRNRLKENLSVGECLQQVHTKYLRYLQHQTYPLADISHQKGDAVLFNTALSIQRVMVSADTPTSTSLNLVHRRDPVEYAIAINVDMEPSRIAVHLRYWLSSLSSEMAMLIASSFEQAVHQIITNDQLHPAQLDLVSTDHKRLLHRWNSTLPAFDEAPIHETIQQHVRETPDALAVRWSKGSFTYRELGLLSDRLGGHLRRQGVAPGAFVPLCFDKSPWTVVALLAVIKSGAAFALCDVTHPDSRLRSICQDLQSTVILCSPDQETRCKKIAEKAIVVGEHNNSWKGDTVGPPTPELSVRAPLFVVYTSGSTGKPKGVLIEHRSFCALVHYQISVWGMSPAARVMQFASYAFDASVFEILFPLMRGTCTCILTEVERRDYLDATMKRLRVTHAFLTPSVARQLSPAAVPDLQVLVCGGEPLSHQDINQWTVNVRLVEAYGPAECTVFSACQPSLTPASCPSDIGRPVGCVVWLVDPDDTERLMPVGSLGEILIEGPIVGRGYINNSQATESSFIKPPAWLRAIRPDLDPTTRLYKTGDLARYFPDGRLDIHGRKDSQIKIRGQRIELGEVEFQVQSRFKLAVGVVVDVAPTGPNGSTALCAFICFGGRVSPSEVDSQVLRAADEDFAAEAASASAALFECLPAYMVPSYFFPLANLPVNASGKADRRYLKSLVDIPAEQLNQYRPLSNRQQRLPSTAGEQLLHNIWSTALGLDGKLIGADDSFFQVGGDSVSAMKVAAAARQQGLEISVADIFAHPRLSALAARSRSKDASDSGFDPTPFSLCPPGAKVLLPMLLRARNMLPPKSTIIDILPVSEGQGFFLTRVALHHFSFAVEGKLDIERIRHACETVYLFFAILRTIFIHWHGQILQLVLDNIEVPFHHILTDSDPAEVHRELRDLDRKVASVLDEQPPCAFILISDRSGTRHELIFRLSHTQWDGLSLAELFSAFGSAYHNRPIPPTTPLTTVVYHRLMRNKTKSLSFWRDYLRGSTISSLIPSAPETTDLSPGTTIWENTNLQPAPEPPSGITMASVVKAAWALVIAQEKGRGCRDIVFGQTVNGRSSALPNIERIFGCCLNFIPVRIRVREEMSIYDLLRHTQAQYQETVAHDDVGFQSIVDESTDWPRGTYFNSIVQHQNIPLHHVMPLEDLKTHFTLNGYFRPGREVIIFTEPDGDVLSVQFCANPNVIEFSYAQKLHRTLVDLIVHLCRCPDDLVSTLLVE.

An adenylation 1 region spans residues 248–641 (HNAQHHPSVV…HRKDNQIKIR (394 aa)). A Carrier 1 domain is found at 780–854 (LPVTANEIVV…DMATRLTRIK (75 aa)). O-(pantetheine 4'-phosphoryl)serine is present on Ser-815. A condensation 1 region spans residues 891–1164 (DAYPCSALQE…IATVPIRINL (274 aa)). The segment at 1328–1725 (QSHAQKTPKS…GRIGNQVKLR (398 aa)) is adenylation 2. One can recognise a Carrier 2 domain in the interval 1858-1936 (RTPLDTERDL…QIAAQAATRA (79 aa)). At Ser-1895 the chain carries O-(pantetheine 4'-phosphoryl)serine. Residues 1953-2261 (KLTPIQQLFF…KDARRRLTRN (309 aa)) are epimerase. Residues 2403-2826 (ENLYPCAPIQ…LVSTDHKRLL (424 aa)) form a condensation 2 region. An adenylation 3 region spans residues 2846–3243 (QQHVRETPDA…GRKDSQIKIR (398 aa)). The region spanning 3375-3451 (LPSTAGEQLL…ALAARSRSKD (77 aa)) is the Carrier 3 domain. The residue at position 3412 (Ser-3412) is an O-(pantetheine 4'-phosphoryl)serine. The tract at residues 3509–3837 (HHFSFAVEGK…EDLKTHFTLN (329 aa)) is condensation 3.

Belongs to the NRP synthetase family.

Its function is as follows. Nonribosomal peptide synthetase; part of the gene cluster that mediates the biosynthesis of oxepinamides, derivatives of anthranilyl-containing tripeptides that share an oxepin ring and a fused pyrimidinone moiety. The nonribosomal peptide synthetase (NRPS) opaA assembles the quinazolinone core with D-Phe incorporation. The first adenylation domain (A1) of opaA loads and activates anthranilic acid whereas the second A domain (A2) is for activating of L-Phe, which is then converted to D-form by the E domain. The third A domain (A3) is responsible for L-Ile activation and the terminal condensation domain C3 for cyclization and releasing the NRPS product protuboxepin K. The cytochrome P450 monooxygenase opaB then catalyzes alone the oxepin ring formation to convert protuboxepin K into protuboxepin A. The flavoenzyme opaC installs subsequently one hydroxyl group at the oxepin ring, accompanied by double bond migration, to form 15-epi-oxepinamide E. The epimerase opaE changes the D-Phe residue back to L-form, leading to oxepinamide E, which is further methylated at the hydroxyl group at C-12 by the O-methyltransferase OpaF to yield oxepinamide F. This is Nonribosomal peptide synthetase opaA from Aspergillus ustus.